The sequence spans 419 residues: Synaptotagmin-2 (419 aa).

Residues Met1–Pro62 lie on the Vesicular side of the membrane. The interval Ala16 to Ser39 is disordered. N-linked (GlcNAc...) asparagine glycosylation is present at Asn29. Residues Trp63 to Ile83 traverse the membrane as a helical segment. Residues Cys84–Lys419 lie on the Cytoplasmic side of the membrane. The segment at Gly99 to Glu138 is disordered. Residues Asp116–Glu136 are compositionally biased toward acidic residues. 2 positions are modified to phosphothreonine: Thr122 and Thr125. The segment at Glu133–Asn379 is phospholipid binding. C2 domains lie at Asn139 to Arg258 and Lys270 to His403. Leu169, Asp170, and Asp176 together coordinate Ca(2+). Thr199 is subject to Phosphothreonine. Tyr227 carries the phosphotyrosine modification. Asp228, Phe229, Asp230, Ser233, Lys234, Asp236, Asp301, Asp307, Asp361, and Asp363 together coordinate Ca(2+). Position 383 is a phosphothreonine (Thr383).

This sequence belongs to the synaptotagmin family. As to quaternary structure, homotetramer. Heterodimer; heterodimerizes with SYT1 in presence of calcium. Interacts with STON2. Interacts with SCAMP5. Interacts with PRRT2. Requires Ca(2+) as cofactor. In terms of processing, phosphorylation at Thr-199 by WNK1, changes the calcium requirement for SYT2-binding to phospholipid membranes. As to expression, expressed at the neuromuscular junction. Expressed in melanocytes.

The protein localises to the cytoplasmic vesicle. It localises to the secretory vesicle. Its subcellular location is the synaptic vesicle membrane. The protein resides in the chromaffin granule membrane. It is found in the cytoplasm. Its function is as follows. Exhibits calcium-dependent phospholipid and inositol polyphosphate binding properties. May have a regulatory role in the membrane interactions during trafficking of synaptic vesicles at the active zone of the synapse. Plays a role in dendrite formation by melanocytes. This chain is Synaptotagmin-2, found in Homo sapiens (Human).